The sequence spans 144 residues: UPF0306 protein Spro_0510 (144 aa).

It belongs to the UPF0306 family.

The chain is UPF0306 protein Spro_0510 from Serratia proteamaculans (strain 568).